Here is a 255-residue protein sequence, read N- to C-terminus: Leucyl/phenylalanyl-tRNA--protein transferase (255 aa).

It belongs to the L/F-transferase family.

The protein resides in the cytoplasm. The catalysed reaction is N-terminal L-lysyl-[protein] + L-leucyl-tRNA(Leu) = N-terminal L-leucyl-L-lysyl-[protein] + tRNA(Leu) + H(+). It catalyses the reaction N-terminal L-arginyl-[protein] + L-leucyl-tRNA(Leu) = N-terminal L-leucyl-L-arginyl-[protein] + tRNA(Leu) + H(+). The enzyme catalyses L-phenylalanyl-tRNA(Phe) + an N-terminal L-alpha-aminoacyl-[protein] = an N-terminal L-phenylalanyl-L-alpha-aminoacyl-[protein] + tRNA(Phe). In terms of biological role, functions in the N-end rule pathway of protein degradation where it conjugates Leu, Phe and, less efficiently, Met from aminoacyl-tRNAs to the N-termini of proteins containing an N-terminal arginine or lysine. This chain is Leucyl/phenylalanyl-tRNA--protein transferase, found in Burkholderia thailandensis (strain ATCC 700388 / DSM 13276 / CCUG 48851 / CIP 106301 / E264).